We begin with the raw amino-acid sequence, 147 residues long: Large ribosomal subunit protein uL13 (147 aa).

The protein belongs to the universal ribosomal protein uL13 family. As to quaternary structure, part of the 50S ribosomal subunit.

This protein is one of the early assembly proteins of the 50S ribosomal subunit, although it is not seen to bind rRNA by itself. It is important during the early stages of 50S assembly. The polypeptide is Large ribosomal subunit protein uL13 (Pseudarthrobacter chlorophenolicus (strain ATCC 700700 / DSM 12829 / CIP 107037 / JCM 12360 / KCTC 9906 / NCIMB 13794 / A6) (Arthrobacter chlorophenolicus)).